The following is a 278-amino-acid chain: Troponin T, slow skeletal muscle (278 aa).

Over residues 1–37 (MSDTEEQEYEEEQPEEEAAEEEEEAPEEPEPVAEPEE) the composition is skewed to acidic residues. Disordered stretches follow at residues 1–63 (MSDT…RVDF) and 105–153 (RRRS…KKKV). Serine 2 carries the phosphoserine; by CK2 modification. Positions 43-55 (SRPVVPPLIPPKI) are enriched in pro residues. The segment covering 105–149 (RRRSERAEQQRFRTEKERERQAKLAEEKMRKEEEEAKKRAEDDAK) has biased composition (basic and acidic residues).

The protein belongs to the troponin T family. In terms of assembly, interacts with TPM3.

In terms of biological role, troponin T is the tropomyosin-binding subunit of troponin, the thin filament regulatory complex which confers calcium-sensitivity to striated muscle actomyosin ATPase activity. This chain is Troponin T, slow skeletal muscle (TNNT1), found in Homo sapiens (Human).